A 187-amino-acid polypeptide reads, in one-letter code: Elongation factor P (187 aa).

This sequence belongs to the elongation factor P family.

It is found in the cytoplasm. It participates in protein biosynthesis; polypeptide chain elongation. Its function is as follows. Involved in peptide bond synthesis. Stimulates efficient translation and peptide-bond synthesis on native or reconstituted 70S ribosomes in vitro. Probably functions indirectly by altering the affinity of the ribosome for aminoacyl-tRNA, thus increasing their reactivity as acceptors for peptidyl transferase. This is Elongation factor P from Gloeobacter violaceus (strain ATCC 29082 / PCC 7421).